The chain runs to 537 residues: CTP synthase (537 aa).

The interval 1-269 is amidoligase domain; it reads MNQTKYIFVT…DVVALKKLDL (269 aa). A CTP-binding site is contributed by Ser15. Ser15 contributes to the UTP binding site. An ATP-binding site is contributed by 16–21; that stretch reads SLGKGI. Tyr56 is a binding site for L-glutamine. An ATP-binding site is contributed by Asp73. Asp73 and Glu143 together coordinate Mg(2+). CTP contacts are provided by residues 150 to 152, 190 to 195, and Lys226; these read DIE and KTKPTQ. UTP is bound by residues 190–195 and Lys226; that span reads KTKPTQ. A Glutamine amidotransferase type-1 domain is found at 295–537; sequence NIGLVGKYVE…VAAAVNAHKK (243 aa). Gly357 is a binding site for L-glutamine. The Nucleophile; for glutamine hydrolysis role is filled by Cys384. L-glutamine is bound by residues 385–388, Glu408, and Arg465; that span reads LGMQ. Residues His510 and Glu512 contribute to the active site.

It belongs to the CTP synthase family. As to quaternary structure, homotetramer.

The enzyme catalyses UTP + L-glutamine + ATP + H2O = CTP + L-glutamate + ADP + phosphate + 2 H(+). The catalysed reaction is L-glutamine + H2O = L-glutamate + NH4(+). It carries out the reaction UTP + NH4(+) + ATP = CTP + ADP + phosphate + 2 H(+). It functions in the pathway pyrimidine metabolism; CTP biosynthesis via de novo pathway; CTP from UDP: step 2/2. Allosterically activated by GTP, when glutamine is the substrate; GTP has no effect on the reaction when ammonia is the substrate. The allosteric effector GTP functions by stabilizing the protein conformation that binds the tetrahedral intermediate(s) formed during glutamine hydrolysis. Inhibited by the product CTP, via allosteric rather than competitive inhibition. Its function is as follows. Catalyzes the ATP-dependent amination of UTP to CTP with either L-glutamine or ammonia as the source of nitrogen. Regulates intracellular CTP levels through interactions with the four ribonucleotide triphosphates. In Flavobacterium johnsoniae (strain ATCC 17061 / DSM 2064 / JCM 8514 / BCRC 14874 / CCUG 350202 / NBRC 14942 / NCIMB 11054 / UW101) (Cytophaga johnsonae), this protein is CTP synthase.